A 359-amino-acid polypeptide reads, in one-letter code: DNA integrity scanning protein DisA (359 aa).

A DAC domain is found at 7–145 (DDIFRATLAA…AGRRYVLDGA (139 aa)). Residues glycine 74, leucine 92, and 105-109 (TRHRT) contribute to the ATP site.

Belongs to the DisA family. In terms of assembly, homooctamer. Mg(2+) is required as a cofactor.

It carries out the reaction 2 ATP = 3',3'-c-di-AMP + 2 diphosphate. Its function is as follows. Participates in a DNA-damage check-point that is active prior to asymmetric division when DNA is damaged. DisA forms globular foci that rapidly scan along the chromosomes during sporulation, searching for lesions. When a lesion is present, DisA pauses at the lesion site. This triggers a cellular response that culminates in a temporary block in sporulation initiation. Functionally, also has diadenylate cyclase activity, catalyzing the condensation of 2 ATP molecules into cyclic di-AMP (c-di-AMP). c-di-AMP acts as a signaling molecule that couples DNA integrity with progression of sporulation. The rise in c-di-AMP level generated by DisA while scanning the chromosome, operates as a positive signal that advances sporulation; upon encountering a lesion, the DisA focus arrests at the damaged site and halts c-di-AMP synthesis. This is DNA integrity scanning protein DisA from Parafrankia sp. (strain EAN1pec).